A 445-amino-acid polypeptide reads, in one-letter code: Competence protein E (445 aa).

The signal sequence occupies residues 1-23 (MKKYFLKCGYFLVCFCLPLIVFA).

Belongs to the bacterial secretin family. PilQ subfamily.

Its subcellular location is the cell outer membrane. Involved in transformation (genetic competence for DNA uptake). This is Competence protein E (comE) from Haemophilus influenzae (strain ATCC 51907 / DSM 11121 / KW20 / Rd).